Consider the following 559-residue polypeptide: Tectonic-like complex member MKS1 (559 aa).

One can recognise a C2 B9-type domain in the interval 311 to 439 (LRLFVNGEVV…TVSTWRPVEL (129 aa)).

As to quaternary structure, part of the tectonic-like complex (also named B9 complex). Interacts with TMEM107. Interacts with TCTN3, AHI1, TCTN1, TCTN2, CC2D2A. Interacts with FLNA. Interacts with TMEM67. Interacts with B9D1 and B9D2.

The protein resides in the cytoplasm. It is found in the cytoskeleton. The protein localises to the cilium basal body. It localises to the microtubule organizing center. Its subcellular location is the centrosome. Functionally, component of the tectonic-like complex, a complex localized at the transition zone of primary cilia and acting as a barrier that prevents diffusion of transmembrane proteins between the cilia and plasma membranes. Involved in centrosome migration to the apical cell surface during early ciliogenesis. Required for ciliary structure and function, including a role in regulating length and appropriate number through modulating centrosome duplication. Required for cell branching morphology. This chain is Tectonic-like complex member MKS1 (MKS1), found in Homo sapiens (Human).